The chain runs to 721 residues: Polyribonucleotide nucleotidyltransferase (721 aa).

Positions 511 and 517 each coordinate Mg(2+). A KH domain is found at 577-637; sequence PSTDFFHINP…SGVQAAREHI (61 aa). In terms of domain architecture, S1 motif spans 654 to 721; it reads GDIHKGIVKK…KGNKISLGIA (68 aa).

The protein belongs to the polyribonucleotide nucleotidyltransferase family. The cofactor is Mg(2+).

The protein localises to the cytoplasm. It catalyses the reaction RNA(n+1) + phosphate = RNA(n) + a ribonucleoside 5'-diphosphate. Functionally, involved in mRNA degradation. Catalyzes the phosphorolysis of single-stranded polyribonucleotides processively in the 3'- to 5'-direction. The sequence is that of Polyribonucleotide nucleotidyltransferase from Sulfurimonas denitrificans (strain ATCC 33889 / DSM 1251) (Thiomicrospira denitrificans (strain ATCC 33889 / DSM 1251)).